The primary structure comprises 507 residues: GMP synthase [glutamine-hydrolyzing] (507 aa).

Residues 3–190 (KILVIDYGSQ…IQGICGLKGS (188 aa)) enclose the Glutamine amidotransferase type-1 domain. The active-site Nucleophile is C77. Catalysis depends on residues H164 and E166. The 192-residue stretch at 191–382 (WTLMDFVENK…LGLPREILYR (192 aa)) folds into the GMPS ATP-PPase domain. Residue 218-224 (SGGVDSS) participates in ATP binding.

In terms of assembly, homodimer.

It carries out the reaction XMP + L-glutamine + ATP + H2O = GMP + L-glutamate + AMP + diphosphate + 2 H(+). Its pathway is purine metabolism; GMP biosynthesis; GMP from XMP (L-Gln route): step 1/1. Functionally, catalyzes the synthesis of GMP from XMP. The sequence is that of GMP synthase [glutamine-hydrolyzing] from Petrotoga mobilis (strain DSM 10674 / SJ95).